Consider the following 621-residue polypeptide: F-box/LRR-repeat protein 4 (621 aa).

Arg-28 bears the Asymmetric dimethylarginine mark. In terms of domain architecture, F-box spans 277-332; sequence NGYFDKLPYELIQLILNHLTLPDLCRLAQTCKLLSQHCCDPLQYIHLNLQPYWAKL. LRR repeat units follow at residues 376–397, 402–421, 427–448, 452–474, 480–501, 504–524, 532–558, 559–583, and 584–609; these read ELVRLELSCSHFLNETCLEVIS, NLQALNLSSCDKLPPQAFNH, SLKRLVLYRTKVEQTALLSILN, ELQHLSLGSCVMIEDYDVIASMI, KLRTLDLWRCKNITENGIAELA, CPLLEELDLGWCPTLQSSTGC, LPNLQKLFLTANRSVCDTDIDELACNC, TRLQQLDILGTRMVSPASLRKLLES, and CKDLSLLDVSFCSQIDNRAVLELNAS.

As to quaternary structure, part of a SCF (SKP1-CUL1-F-box) protein ligase complex. Interacts with VCP. Interacts with PPTC7; this interaction promotes destruction of BNIP3 and NIX and mitophagy suppression. Expressed in heart, kidney, liver, lung, pancreas, and placenta, but not in skeletal muscle.

It is found in the cytoplasm. The protein resides in the nucleus. It localises to the mitochondrion outer membrane. Substrate-recognition component of the mitochondria-localized SCF-FBXL4 ubiquitin E3 ligase complex that plays a role in the restriction of mitophagy by controlling the degradation of BNIP3 and NIX mitophagy receptors. Rescues also mitochondrial injury through reverting hyperactivation of DRP1-mediated mitochondrial fission. This is F-box/LRR-repeat protein 4 (FBXL4) from Homo sapiens (Human).